Here is a 792-residue protein sequence, read N- to C-terminus: Xaa-Pro dipeptidyl-peptidase (792 aa).

Active-site charge relay system residues include serine 363, aspartate 482, and histidine 513.

Belongs to the peptidase S15 family. Homodimer.

The protein resides in the cytoplasm. The enzyme catalyses Hydrolyzes Xaa-Pro-|- bonds to release unblocked, N-terminal dipeptides from substrates including Ala-Pro-|-p-nitroanilide and (sequentially) Tyr-Pro-|-Phe-Pro-|-Gly-Pro-|-Ile.. In terms of biological role, removes N-terminal dipeptides sequentially from polypeptides having unsubstituted N-termini provided that the penultimate residue is proline. The sequence is that of Xaa-Pro dipeptidyl-peptidase (pepX) from Lactobacillus delbrueckii subsp. lactis.